The chain runs to 961 residues: Retinoblastoma-like protein homolog lin-35 (961 aa).

Disordered stretches follow at residues 1-43 (MPKR…PPAK) and 55-129 (GGVQ…TPPP). The span at 68 to 81 (ELTQMTIKQETEGN) shows a compositional bias: polar residues. The span at 107 to 119 (GEDDDYEEDDADS) shows a compositional bias: acidic residues. A Phosphoserine; by CDK4 modification is found at serine 714. Threonine 719 carries the post-translational modification Phosphothreonine; by CDK4.

This sequence belongs to the retinoblastoma protein (RB) family. Component of the DRM complex, at least composed of lin-9, lin-35, lin-37, lin-52, lin-53, lin-54, dpl-1 and efl-1. Interacts with lin-53. Interacts (via C-terminus) with dpl-1 (via C-terminus) and efl-1 (via C-terminus). Interacts (via C-terminus) with lin-8. In terms of processing, phosphorylated by the cyclin dependent kinase cdk-4. Phosphorylation inhibits the transcriptional repressor activity of lin-35 and allows for progression through the G1 phase of the cell cycle during postembryonic development.

The protein localises to the nucleus. In terms of biological role, key regulator of cell division which acts as a transcriptional repressor and negatively regulates cell cycle progression in its active unphosphorylated form, but allows cell cycle progression when phosphorylated. When unphosphorylated and in its active form, interacts with E2F transcription factors such as efl-1 to repress their transcriptional activity and negatively regulate the progression through the G1 phase of the cell cycle during postembryonic development. May furthermore act with cell cycle regulator cki-1 to negatively regulate cell cycle progression. Acts redundantly with lin-53, fzr-1 and lin-23 to control cell cycle progression by regulating the expression of G1 phase cyclins. In particular, negatively regulates the expression of the cyclin E homolog cye-1, which is essential for the G1/S phase transition. Regulates cell division in the intestinal lineage, repressing the expression of genes such as cdc-25.2, which are required for intestinal cells to transition from the karyokinesis cell cycle (also known as nuclear division) to endoreplication, a specific growth pathway in the intestinal epithelium required for feeding and gut development in growing larvae during the L1 stage molt. Its role as a transcriptional repressor in the regulation of intestinal cell division during postembryonic development is most likely in complex with an E2F cell cycle regulatory transcription factor efl-1 and its binding partner the synthetic multivulva class B protein dpl-1. Synthetic multivulva (synMuv) class B protein. SynMuv proteins are required to repress the induction of vulval development by Ras signaling and probably act by forming the multiprotein DRM complex that represses transcription. Together with synMuv class B protein lin-53, and redundantly with synMuv class A protein lin-15A, represses transcription to control vulval development, most likely through antagonization of the Ras-signaling pathway in the major hypodermal syncytium hyp7. Acts redundantly with the transcriptional corepressor spr-1 and the zinc finger protein zfp-2 to play a role in vulval morphogenesis, promote germline proliferation and somatic gonad development. Acts redundantly with ubc-18 in the regulation of pharyngeal morphogenesis during embryonic development by negatively regulating the expression of proteins such as sup-35. Functions with the SWI/SNF complex and proteins such as pha-1 to regulate larval development. Functions redundantly with xnp-1 to regulate somatic gonad development. Acts redundantly with slr-2 to regulate the expression of intestinal genes required for nutrient utilization. Regulates transcription in response to starvation. Furthermore, in response to starvation, promotes germ cell programmed cell death by negatively regulating the expression of the anti-apoptotic protein ced-9. Conversely, in conjunction with mcd-1, efl-1 and the synthetic multivulva class B proteins dpl-1, lin-37 and lin-52, may also regulate transcription to promote programmed cell death independently of ced-1, ced-8 and ced-9 cell death pathways. Directly involved in heterochromatin formation by maintaining overall chromatin structure and, in particular, that of constitutive heterochromatin by stabilizing histone methylation. In particular, negatively regulates the expression of mes-4, a histone methyltransferase that controls the expression of germline specific genes. May play a role in double strand break formation during meiosis. May suppress sensitivity to RNAi. May play a role in the response to endoplasmic reticulum (ER) stress. In Caenorhabditis elegans, this protein is Retinoblastoma-like protein homolog lin-35.